The sequence spans 367 residues: Peptidyl-prolyl cis-trans isomerase D (367 aa).

The PPIase cyclophilin-type domain maps to phenylalanine 7–glutamate 171. 3 TPR repeats span residues isoleucine 213–tyrosine 246, isoleucine 264–alanine 297, and alanine 302–aspartate 335.

The protein belongs to the cyclophilin-type PPIase family. PPIase D subfamily.

It is found in the cytoplasm. The catalysed reaction is [protein]-peptidylproline (omega=180) = [protein]-peptidylproline (omega=0). Functionally, PPIases accelerate the folding of proteins. It catalyzes the cis-trans isomerization of proline imidic peptide bonds in oligopeptides. The protein is Peptidyl-prolyl cis-trans isomerase D (CPR6) of Yarrowia lipolytica (strain CLIB 122 / E 150) (Yeast).